Reading from the N-terminus, the 101-residue chain is Small ribosomal subunit protein uS10 (101 aa).

The protein belongs to the universal ribosomal protein uS10 family. As to quaternary structure, part of the 30S ribosomal subunit.

Its function is as follows. Involved in the binding of tRNA to the ribosomes. This chain is Small ribosomal subunit protein uS10, found in Brachyspira pilosicoli (Serpulina pilosicoli).